The primary structure comprises 258 residues: UPF0246 protein ETA_07010 (258 aa).

It belongs to the UPF0246 family.

This is UPF0246 protein ETA_07010 from Erwinia tasmaniensis (strain DSM 17950 / CFBP 7177 / CIP 109463 / NCPPB 4357 / Et1/99).